The following is a 79-amino-acid chain: Probable [Fe-S]-dependent transcriptional repressor (79 aa).

Positions 56, 61, 64, and 71 each coordinate iron-sulfur cluster.

The protein belongs to the FeoC family.

May function as a transcriptional regulator that controls feoABC expression. This chain is Probable [Fe-S]-dependent transcriptional repressor, found in Klebsiella pneumoniae (strain 342).